Reading from the N-terminus, the 486-residue chain is Cobyric acid synthase (486 aa).

Positions 248 to 435 (VLNVVVPVLP…LHGLFESPAA (188 aa)) constitute a GATase cobBQ-type domain. The Nucleophile role is filled by cysteine 329. Histidine 427 is a catalytic residue.

The protein belongs to the CobB/CobQ family. CobQ subfamily.

The protein operates within cofactor biosynthesis; adenosylcobalamin biosynthesis. Its function is as follows. Catalyzes amidations at positions B, D, E, and G on adenosylcobyrinic A,C-diamide. NH(2) groups are provided by glutamine, and one molecule of ATP is hydrogenolyzed for each amidation. The polypeptide is Cobyric acid synthase (Pseudomonas syringae pv. tomato (strain ATCC BAA-871 / DC3000)).